The chain runs to 458 residues: UDP-N-acetylglucosamine 1-carboxyvinyltransferase (458 aa).

34 to 35 (KN) is a phosphoenolpyruvate binding site. Arg-104 contributes to the UDP-N-acetyl-alpha-D-glucosamine binding site. The Proton donor role is filled by Cys-128. A 2-(S-cysteinyl)pyruvic acid O-phosphothioketal modification is found at Cys-128. UDP-N-acetyl-alpha-D-glucosamine is bound by residues Asp-319 and Ile-341.

Belongs to the EPSP synthase family. MurA subfamily.

The protein localises to the cytoplasm. The enzyme catalyses phosphoenolpyruvate + UDP-N-acetyl-alpha-D-glucosamine = UDP-N-acetyl-3-O-(1-carboxyvinyl)-alpha-D-glucosamine + phosphate. The protein operates within cell wall biogenesis; peptidoglycan biosynthesis. Functionally, cell wall formation. Adds enolpyruvyl to UDP-N-acetylglucosamine. This chain is UDP-N-acetylglucosamine 1-carboxyvinyltransferase, found in Prochlorococcus marinus (strain MIT 9515).